The chain runs to 875 residues: Alanine--tRNA ligase (875 aa).

Zn(2+) is bound by residues histidine 564, histidine 568, cysteine 666, and histidine 670.

It belongs to the class-II aminoacyl-tRNA synthetase family. As to quaternary structure, homotetramer. Requires Zn(2+) as cofactor.

It is found in the cytoplasm. It catalyses the reaction tRNA(Ala) + L-alanine + ATP = L-alanyl-tRNA(Ala) + AMP + diphosphate. In terms of biological role, catalyzes the attachment of alanine to tRNA(Ala) in a two-step reaction: alanine is first activated by ATP to form Ala-AMP and then transferred to the acceptor end of tRNA(Ala). Also edits incorrectly charged Ser-tRNA(Ala) and Gly-tRNA(Ala) via its editing domain. This Yersinia pseudotuberculosis serotype O:1b (strain IP 31758) protein is Alanine--tRNA ligase.